An 85-amino-acid chain; its full sequence is Cell division protein ZapA (85 aa).

A coiled-coil region spans residues 60–85 (AVNVVHDYLKLKEQYEKLEIQLKEKE).

Belongs to the ZapA family. Type 2 subfamily. Homodimer. Interacts with FtsZ.

It localises to the cytoplasm. Activator of cell division through the inhibition of FtsZ GTPase activity, therefore promoting FtsZ assembly into bundles of protofilaments necessary for the formation of the division Z ring. It is recruited early at mid-cell but it is not essential for cell division. The polypeptide is Cell division protein ZapA (Bacillus pumilus (strain SAFR-032)).